A 715-amino-acid chain; its full sequence is Coiled-coil domain-containing protein 170 (715 aa).

Coiled-coil stretches lie at residues 30 to 286 (VTRE…AGQQ), 360 to 418 (ESRD…LVSG), and 478 to 656 (ENKT…FREV). The interval 355–591 (MDSREESRDR…DLNKSRDQLE (237 aa)) is required for binding to microtubules and Golgi apparatus location.

As to quaternary structure, binds Golgi-associated microtubules.

Its subcellular location is the golgi apparatus. In terms of biological role, plays a role in Golgi-associated microtubules organization and stabilization. This chain is Coiled-coil domain-containing protein 170, found in Homo sapiens (Human).